Reading from the N-terminus, the 456-residue chain is MLPSQSPAIFTVSRLNQTVRLLLEHEMGQVWISGEISNFTQPASGHWYFTLKDDTAQVRCAMFRNSNRRVTFRPQHGQQVLVRANITLYEPRGDYQIIVESMQPAGEGLLQQKYEQLKAKLQAEGLFDLQYKKPLPSPAHCVGVITSKTGAALHDILHVLKRRDPSLPVIIYPTAVQGDDAPGQIVRAIELANQRNECDVLIVGRGGGSLEDLWSFNDERVAQAIFASRIPVVSAVGHETDVTIADFVADLRAPTPSAAAEVVSRNQQELLRQVQSTRQRLEMAMDYYLANRTRRFTQIHHRLQQQHPQLRLARQQTMLERLQKRMSFALENQLKRAGQQQQRLTQRLNQQNPQPKIHRAQTRIQQLEYRLAETLRAQLSATRERFGNAVTHLEAVSPLSTLARGYSVTTATDGKVLKKVKQVKAGEMLTTRLEDGWVESEVKNIQPIKKSRKKVH.

Belongs to the XseA family. As to quaternary structure, heterooligomer composed of large and small subunits.

The protein resides in the cytoplasm. The catalysed reaction is Exonucleolytic cleavage in either 5'- to 3'- or 3'- to 5'-direction to yield nucleoside 5'-phosphates.. Functionally, bidirectionally degrades single-stranded DNA into large acid-insoluble oligonucleotides, which are then degraded further into small acid-soluble oligonucleotides. The chain is Exodeoxyribonuclease 7 large subunit from Shigella dysenteriae serotype 1 (strain Sd197).